The following is a 374-amino-acid chain: 4-galactosyl-N-acetylglucosaminide 3-alpha-L-fucosyltransferase FUT5 (374 aa).

Over 1-15 (MDPLGPAKPQWLWRR) the chain is Cytoplasmic. A helical; Signal-anchor for type II membrane protein transmembrane segment spans residues 16-34 (CLAGLLFQLLVAVCFFSYL). Over 35–374 (RVSRDDATGS…TVRSIAAWFT (340 aa)) the chain is Lumenal. Residues Asn60, Asn105, Asn167, and Asn198 are each glycosylated (N-linked (GlcNAc...) asparagine).

It belongs to the glycosyltransferase 10 family. In terms of tissue distribution, liver, colon and testis and trace amounts in T-cells and brain.

The protein resides in the golgi apparatus. It localises to the golgi stack membrane. The catalysed reaction is a beta-D-galactosyl-(1-&gt;3)-N-acetyl-beta-D-glucosaminyl derivative + GDP-beta-L-fucose = a beta-D-galactosyl-(1-&gt;3)-[alpha-L-fucosyl-(1-&gt;4)]-N-acetyl-beta-D-glucosaminyl derivative + GDP + H(+). It catalyses the reaction an N-acetyl-alpha-neuraminyl-(2-&gt;3)-beta-D-galactosyl-(1-&gt;4)-N-acetyl-beta-D-glucosaminyl derivative + GDP-beta-L-fucose = an alpha-Neu5Ac-(2-&gt;3)-beta-D-Gal-(1-&gt;4)-[alpha-L-Fuc-(1-&gt;3)]-beta-D-GlcNAc derivative + GDP + H(+). It carries out the reaction an alpha-Neu5Ac-(2-&gt;3)-beta-D-Gal-(1-&gt;4)-beta-D-GlcNAc-(1-&gt;3)-beta-D-Gal-(1-&gt;4)-[alpha-L-Fuc-(1-&gt;3)]-beta-D-GlcNAc derivative + GDP-beta-L-fucose = an alpha-Neu5Ac-(2-&gt;3)-beta-D-Gal-(1-&gt;4)-[alpha-L-Fuc-(1-&gt;3)]-beta-D-GlcNAc-(1-&gt;3)-beta-D-Gal-(1-&gt;4)-[alpha-L-Fuc-(1-&gt;3)]-beta-D-GlcNAc derivative + GDP + H(+). The enzyme catalyses a beta-D-galactosyl-(1-&gt;4)-N-acetyl-beta-D-glucosaminyl derivative + GDP-beta-L-fucose = a beta-D-galactosyl-(1-&gt;4)-[alpha-L-fucosyl-(1-&gt;3)]-N-acetyl-beta-D-glucosaminyl derivative + GDP + H(+). The catalysed reaction is a neolactoside nLc4Cer + GDP-beta-L-fucose = a neolactoside III(3)-alpha-Fuc-nLc4Cer + GDP + H(+). It catalyses the reaction a neolactoside nLc6Cer + GDP-beta-L-fucose = beta-D-galactosyl-(1-&gt;4)-N-acetyl-beta-D-glucosaminyl-(1-&gt;3)-beta-D-galactosyl-(1-&gt;4)-[alpha-L-fucosyl-(1-&gt;3)]-N-acetyl-beta-D-glucosaminyl-(1-&gt;3)-beta-D-galactosyl-(1-&gt;4)-beta-D-glucosyl-(1&lt;-&gt;1')-ceramide + GDP + H(+). It carries out the reaction a neolactoside nLc6Cer(d18:1(4E)) + GDP-beta-L-fucose = a neolactoside III(3)-alpha-Fuc-nLc6Cer(d18:1(4E)) + GDP + H(+). The enzyme catalyses a neolactoside nLc4Cer(d18:1(4E)) + GDP-beta-L-fucose = a neolactoside III(3)-alpha-Fuc-nLc4Cer(d18:1(4E)) + GDP + H(+). The catalysed reaction is a neolactoside VI(3)-alpha-NeuNAc-nLc6Cer + GDP-beta-L-fucose = a neolactoside VI(3)-alpha-NeuAc,III(3)-alphaFuc-nLc6Cer + GDP + H(+). It catalyses the reaction beta-D-galactosyl-(1-&gt;4)-N-acetyl-D-glucosamine + GDP-beta-L-fucose = beta-D-galactosyl-(1-&gt;4)-[alpha-L-fucosyl-(1-&gt;3)]-N-acetyl-D-glucosamine + GDP + H(+). It carries out the reaction N-acetyl-alpha-neuraminosyl-(2-&gt;3)-beta-D-galactosyl-(1-&gt;4)-N-acetyl-beta-D-glucosamine + GDP-beta-L-fucose = N-acetyl-alpha-neuraminosyl-(2-&gt;3)-beta-D-galactosyl-(1-&gt;4)-[alpha-L-fucosyl-(1-&gt;3)]-N-acetyl-beta-D-glucosamine + GDP + H(+). The enzyme catalyses alpha-L-Fuc-(1-&gt;2)-beta-D-Gal-(1-&gt;4)-D-GlcNAc + GDP-beta-L-fucose = alpha-L-Fuc-(1-&gt;2)-beta-D-Gal-(1-&gt;4)-[alpha-L-Fuc-(1-&gt;3)]-D-GlcNAc + GDP + H(+). The catalysed reaction is an alpha-Neu5Ac-(2-&gt;3)-beta-D-Gal-(1-&gt;3)-D-GlcNAc derivative + GDP-beta-L-fucose = an alpha-Neu5Ac-(2-&gt;3)-beta-D-Gal-(1-&gt;3)-[alpha-L-Fuc-(1-&gt;4)]-beta-D-GlcNAc derivative + GDP + H(+). It functions in the pathway protein modification; protein glycosylation. Its function is as follows. Catalyzes preferentially the transfer of L-fucose, from a guanosine diphosphate-beta-L-fucose, to the N-acetyl-beta-D-glucosamine (GlcNAc) of an N-acetyllactosamine unit (type 2 chain) of an oligosaccharide, or a glycoprotein- and a glycolipid-linked N-acetyllactosamine unit via an alpha (1,3) linkage and participates in the surface expression of VIM-2, Lewis X/SSEA-1 and sialyl Lewis X antigens. Preferentially transfers fucose to the GlcNAc of an internal N-acetyllactosamine unit of a poly-N-acetyllactosamine chain acceptor substrate. Also catalyzes to a lesser extend the transfer of L-fucose to the GlcNAc of a type 1 (beta-D-galactosyl-(1-&gt;3)-N-acetyl-beta-D-glucosaminyl) or H-type 1 (alpha-L-Fuc-(1-&gt;2)-beta-D-Gal-(1-&gt;3)-D-GlcNAc) chain oligosaccharide via an alpha (1,4) linkage. Preferentially catalyzes sialylated type 2 oligosaccharide acceptors over neutral type 2 or H type 2 (alpha-L-Fuc-(1-&gt;2)-beta-D-Gal-(1-&gt;4)-D-GlcNAc) oligosaccharide acceptors. Lactose-based structures are also acceptor substrates. The chain is 4-galactosyl-N-acetylglucosaminide 3-alpha-L-fucosyltransferase FUT5 from Homo sapiens (Human).